A 434-amino-acid chain; its full sequence is Tryptophan dimethylallyltransferase nptA (434 aa).

L-tryptophan-binding positions include 91–92 (SL) and glutamate 100. Arginine 115, lysine 202, and tyrosine 204 together coordinate substrate. An L-tryptophan-binding site is contributed by tyrosine 206. Positions 271, 273, 275, 358, 423, and 427 each coordinate substrate.

This sequence belongs to the tryptophan dimethylallyltransferase family. In terms of assembly, homodimer.

The catalysed reaction is L-tryptophan + dimethylallyl diphosphate = 4-(3-methylbut-2-enyl)-L-tryptophan + diphosphate. The protein operates within secondary metabolite biosynthesis. Nonribosomal peptide synthase involved in the synthesis of nidulanin A and derived compounds. Nidulanin A is a tetracyclopeptide with the sequence L-Phe-L-Kyn-L-Val-D-Val and an isoprene unit N-linked to the amino group of L-kynurenine. The NRPS nlsA is responsible of the synthesis of the cyclopeptide and the prenyltransferase nptA adds the isoprene unit on the L-kynurenine residue of nidulanin A. Further modifications lead to additional oxygenated related compounds. In Emericella nidulans (strain FGSC A4 / ATCC 38163 / CBS 112.46 / NRRL 194 / M139) (Aspergillus nidulans), this protein is Tryptophan dimethylallyltransferase nptA.